The sequence spans 202 residues: Matrix protein (202 aa).

A PPXY motif motif is present at residues 35 to 38 (PPEY). Positions 115–151 (KIRRTLVFQWAESSGPLDGEELEYSQEITWDDDSEFV) are essential for glycoprotein binding.

The protein belongs to the lyssavirus matrix protein family. Homomultimer. Interacts with nucleoprotein and with the cytoplasmic domain of glycoprotein.

It localises to the virion membrane. It is found in the host endomembrane system. Plays a major role in assembly and budding of virion. Completely covers the ribonucleoprotein coil and keep it in condensed bullet-shaped form. Inhibits viral transcription and stimulates replication. Plays a major role in early induction of TRAIL-mediated apoptosis in infected neurons. The polypeptide is Matrix protein (M) (Irkut virus (IRKV)).